The sequence spans 235 residues: 2-C-methyl-D-erythritol 4-phosphate cytidylyltransferase (235 aa).

Belongs to the IspD/TarI cytidylyltransferase family. IspD subfamily.

The enzyme catalyses 2-C-methyl-D-erythritol 4-phosphate + CTP + H(+) = 4-CDP-2-C-methyl-D-erythritol + diphosphate. It functions in the pathway isoprenoid biosynthesis; isopentenyl diphosphate biosynthesis via DXP pathway; isopentenyl diphosphate from 1-deoxy-D-xylulose 5-phosphate: step 2/6. Its function is as follows. Catalyzes the formation of 4-diphosphocytidyl-2-C-methyl-D-erythritol from CTP and 2-C-methyl-D-erythritol 4-phosphate (MEP). The protein is 2-C-methyl-D-erythritol 4-phosphate cytidylyltransferase of Mycolicibacterium paratuberculosis (strain ATCC BAA-968 / K-10) (Mycobacterium paratuberculosis).